The sequence spans 351 residues: MSKFWSPAVRELTPYVPGEQPRERLIKLNTNENPYPPAPGVEQVLREFPVDHLRLYPDPSATALREALAETYDVATEQVFVGNGSDEVLALAFQAFFRQSRPLLMPAISYSFYPVYCKLYDVAYRSVALDDQWRVPLTAFDTDNGGIVFANPNAPTGHGHSRDAIAALLERNTESVVLVDEAYVDFGGESAVPLVERFPNLLVTGTFSKSRSLAGLRLGYAIGSRELIEGLERVKDSFNSFPIDRITIDAGIAALHDRAYFEACRERVITTRERTRQRLESLGFEVMPSQSNFLFVRHETYEGRAIFGELRERGILVRHFDKEALSDFLRISIGTEDEMDSLIEALEAVCR.

The residue at position 209 (lysine 209) is an N6-(pyridoxal phosphate)lysine.

It belongs to the class-II pyridoxal-phosphate-dependent aminotransferase family. Histidinol-phosphate aminotransferase subfamily. As to quaternary structure, homodimer. Pyridoxal 5'-phosphate serves as cofactor.

It carries out the reaction L-histidinol phosphate + 2-oxoglutarate = 3-(imidazol-4-yl)-2-oxopropyl phosphate + L-glutamate. It functions in the pathway amino-acid biosynthesis; L-histidine biosynthesis; L-histidine from 5-phospho-alpha-D-ribose 1-diphosphate: step 7/9. The polypeptide is Histidinol-phosphate aminotransferase (Chromohalobacter salexigens (strain ATCC BAA-138 / DSM 3043 / CIP 106854 / NCIMB 13768 / 1H11)).